The sequence spans 343 residues: Mitochondrial amidoxime-reducing component 1 (343 aa).

Residues 1 to 25 are Mitochondrial matrix-facing; that stretch reads MSNTVFSGAVGPLRAAALSISRHRL. A helical; Signal-anchor for type II membrane protein transmembrane segment spans residues 26–44; that stretch reads PLLCAAGLGLTAVASWMWW. Residues 45–343 are Cytoplasmic-facing; the sequence is RKRQGEAEDL…DPVYRVTRKG (299 aa). Residues K69, S70, and R94 each coordinate Mo-molybdopterin. Positions 95 to 186 are MOSC N-terminal region; the sequence is HWLVVTEEGN…SSQPYRLVHF (92 aa). In terms of domain architecture, MOSC spans 181–339; the sequence is YRLVHFEADV…IRVGDPVYRV (159 aa). Mo-molybdopterin-binding residues include S215, R242, R276, C277, and Y321.

The cofactor is Mo-molybdopterin.

Its subcellular location is the mitochondrion outer membrane. It is found in the membrane. It catalyses the reaction N(omega)-hydroxy-L-arginine + 2 Fe(II)-[cytochrome b5] + 2 H(+) = L-arginine + 2 Fe(III)-[cytochrome b5] + H2O. Functionally, catalyzes the reduction of N-oxygenated molecules, acting as a counterpart of cytochrome P450 and flavin-containing monooxygenases in metabolic cycles. As a component of prodrug-converting system, reduces a multitude of N-hydroxylated prodrugs particularly amidoximes, leading to increased drug bioavailability. May be involved in mitochondrial N(omega)-hydroxy-L-arginine (NOHA) reduction, regulating endogenous nitric oxide levels and biosynthesis. Postulated to cleave the N-OH bond of N-hydroxylated substrates in concert with electron transfer from NADH to cytochrome b5 reductase then to cytochrome b5, the ultimate electron donor that primes the active site for substrate reduction. The chain is Mitochondrial amidoxime-reducing component 1 (mtarc1) from Xenopus laevis (African clawed frog).